A 719-amino-acid chain; its full sequence is Ribosomal RNA large subunit methyltransferase K/L (719 aa).

The region spanning 43 to 154 (TQYRVLLWTR…REELVISLDL (112 aa)) is the THUMP domain.

Belongs to the methyltransferase superfamily. RlmKL family.

The protein localises to the cytoplasm. The catalysed reaction is guanosine(2445) in 23S rRNA + S-adenosyl-L-methionine = N(2)-methylguanosine(2445) in 23S rRNA + S-adenosyl-L-homocysteine + H(+). It catalyses the reaction guanosine(2069) in 23S rRNA + S-adenosyl-L-methionine = N(2)-methylguanosine(2069) in 23S rRNA + S-adenosyl-L-homocysteine + H(+). Specifically methylates the guanine in position 2445 (m2G2445) and the guanine in position 2069 (m7G2069) of 23S rRNA. This is Ribosomal RNA large subunit methyltransferase K/L from Pasteurella multocida (strain Pm70).